Here is a 145-residue protein sequence, read N- to C-terminus: MNGRVDYLVSEEEINLTRGPSGLGFNIVGGTDQQYVSNDSGIYVSRIKEDGAAARDGRLQEGDKILSVNGQDLKNLLHQDAVDLFRNAGYAVSLRVQHRLPVQNGPIVHRGDGEPSGVPVAVVLLPVFALTLVAVWAFVRYRKQL.

Residues 1-117 lie on the Cytoplasmic side of the membrane; it reads MNGRVDYLVS…VHRGDGEPSG (117 aa). The 88-residue stretch at 13 to 100 folds into the PDZ domain; sequence EINLTRGPSG…AVSLRVQHRL (88 aa). The chain crosses the membrane as a helical span at residues 118 to 138; that stretch reads VPVAVVLLPVFALTLVAVWAF. At 139–145 the chain is on the mitochondrial intermembrane side; it reads VRYRKQL.

Binds (via the PDZ domain) to isoform 2A of SYNJ2 (via the unique motif in the C-terminus). Interacts (via C-terminus) with RALBP1. Interacts (via PDZ domain) with ACVR2A (via C-terminus) and ACVR2B (via C-terminus). Forms a ternary complex with ACVR2A and RALBP1. Interacts with MAPK12. Interacts with DLL1; enhances DLL1 protein stability, and promotes notch signaling in endothelial cells. In terms of tissue distribution, widely expressed.

It is found in the mitochondrion outer membrane. In terms of biological role, regulates endocytosis of activin type 2 receptor kinases through the Ral/RALBP1-dependent pathway and may be involved in suppression of activin-induced signal transduction. The polypeptide is Synaptojanin-2-binding protein (Synj2bp) (Rattus norvegicus (Rat)).